A 316-amino-acid polypeptide reads, in one-letter code: Ribosomal RNA small subunit methyltransferase H (316 aa).

Residues Ser-35–His-37, Asp-55, Phe-84, Asp-105, and Gln-112 each bind S-adenosyl-L-methionine.

The protein belongs to the methyltransferase superfamily. RsmH family.

It localises to the cytoplasm. The catalysed reaction is cytidine(1402) in 16S rRNA + S-adenosyl-L-methionine = N(4)-methylcytidine(1402) in 16S rRNA + S-adenosyl-L-homocysteine + H(+). Its function is as follows. Specifically methylates the N4 position of cytidine in position 1402 (C1402) of 16S rRNA. In Streptococcus pyogenes serotype M49 (strain NZ131), this protein is Ribosomal RNA small subunit methyltransferase H.